A 323-amino-acid chain; its full sequence is HPr kinase/phosphorylase (323 aa).

Residues H146 and K167 contribute to the active site. 161 to 168 contributes to the ATP binding site; the sequence is GESGLGKS. S168 is a binding site for Mg(2+). D185 (proton acceptor; for phosphorylation activity. Proton donor; for dephosphorylation activity) is an active-site residue. The tract at residues 209 to 218 is important for the catalytic mechanism of both phosphorylation and dephosphorylation; that stretch reads LEVRGLGLLD. E210 lines the Mg(2+) pocket. R250 is an active-site residue. The important for the catalytic mechanism of dephosphorylation stretch occupies residues 271-276; the sequence is QVAAGR.

Belongs to the HPrK/P family. As to quaternary structure, homohexamer. The cofactor is Mg(2+).

It carries out the reaction [HPr protein]-L-serine + ATP = [HPr protein]-O-phospho-L-serine + ADP + H(+). The enzyme catalyses [HPr protein]-O-phospho-L-serine + phosphate + H(+) = [HPr protein]-L-serine + diphosphate. In terms of biological role, catalyzes the ATP- as well as the pyrophosphate-dependent phosphorylation of a specific serine residue in HPr, a phosphocarrier protein of the phosphoenolpyruvate-dependent sugar phosphotransferase system (PTS). HprK/P also catalyzes the pyrophosphate-producing, inorganic phosphate-dependent dephosphorylation (phosphorolysis) of seryl-phosphorylated HPr (P-Ser-HPr). The chain is HPr kinase/phosphorylase from Cupriavidus pinatubonensis (strain JMP 134 / LMG 1197) (Cupriavidus necator (strain JMP 134)).